A 401-amino-acid polypeptide reads, in one-letter code: Multidrug resistance protein MdtH (401 aa).

11 consecutive transmembrane segments (helical) span residues 13-33, 34-54, 99-116, 139-159, 165-185, 214-234, 243-263, 277-297, 299-319, 340-360, and 368-388; these read YFLLLDNLLVVLGFFIVFPLI, SIRFVDQLGWAAVLVGLALGL, PWILWLACALSGLGGTLF, LLMMQDSAGAVIGALIGSWLL, FVCWTGAVIFILAAGWNVWLL, VLTLTGYYMLSVQVMLMLPIV, AAVKWMYAIEAALSLTLLYPI, LMFGLLIMTLSLFPVGLITHL, TLFMFICFFYMGSIIAEPARE, LGLALGGALGYTGGGWMYDTG, and LPWFLLGVIGLITLVGLYWQF.

Belongs to the major facilitator superfamily. DHA1 family. MdtH (TC 2.A.1.2.21) subfamily.

Its subcellular location is the cell inner membrane. This Yersinia enterocolitica serotype O:8 / biotype 1B (strain NCTC 13174 / 8081) protein is Multidrug resistance protein MdtH.